Here is a 793-residue protein sequence, read N- to C-terminus: MGVWLNKDDYIRDLKRIILCFLIVYMAILVGTDQDFYSLLGVSKTASSREIRQAFKKLALKLHPDKNPNNPNAHGDFLKINRAYEVLKDEDLRKKYDKYGEKGLEDNQGGQYESWNYYRYDFGIYDDDPEIITLERREFDAAVNSGELWFVNFYSPGCSHCHDLAPTWRDFAKEVDGLLRIGAVNCGDDRMLCRMKGVNSYPSLFIFRSGMAPVKYHGDRSKESLVSFAMQHVRSTVTELWTGNFVNSIQTAFAAGIGWLITFCSKGGDCLTSQTRLRLSGMLDGLVNVGWMDCATQDNLCKSLDITTSTTAYFPPGATLNNKEKNSILFLNSLDAKEIYLEVIHNLPDFELLSANTLEDRLAHHRWLLFFHFGKNENSNDPELKKLKTLLKNDHIQVGRFDCSSAPDICSNLYVFQPSLAVFKGQGTKEYEIHHGKKILYDILAFAKESVNSHVTTLGPQNFPANDKEPWLVDFFAPWCPPCRALLPELRRASNLLYGQLKFGTLDCTVHEGLCNMYNIQAYPTTVVFNQSNIHEYEGHHSAEQILEFIEDLMNPSVVSLTPTTFNELVTQRKHNEVWMVDFYSPWCHPCQVLMPEWKRMARTLTGLINVGSIDCQQYHSFCAQENVQRYPEIRFFPPKSNKAYHYHSYNGWNRDAYSLRIWGLGFLPQVSTDLTPQTFSEKVLQGKNHWVIDFYAPWCGPCQNFAPEFELLARMIKGKVKAGKVDCQAYAQTCQKAGIRAYPTVKFYFYERAKRNFQEEQINTRDAKAIAALISEKLETLRNQGKRNKDEL.

A signal peptide spans 1-32; the sequence is MGVWLNKDDYIRDLKRIILCFLIVYMAILVGT. A J domain is found at 35 to 100; it reads DFYSLLGVSK…DLRKKYDKYG (66 aa). The region spanning 130 to 232 is the Thioredoxin 1 domain; the sequence is EIITLERREF…ESLVSFAMQH (103 aa). Cysteine 158 and cysteine 161 are oxidised to a cystine. Trxb regions lie at residues 235–350 and 348–463; these read STVT…LPDF and PDFE…PQNF. Thioredoxin domains lie at 454 to 553, 557 to 662, and 671 to 778; these read HVTT…IEDL, SVVS…SLRI, and VSTD…ISEK. The cysteines at positions 480 and 483 are disulfide-linked. N-linked (GlcNAc...) asparagine glycosylation is present at asparagine 530. 2 cysteine pairs are disulfide-bonded: cysteine 588–cysteine 591 and cysteine 700–cysteine 703. The Prevents secretion from ER signature appears at 790-793; that stretch reads KDEL.

In terms of assembly, interacts with EDEM1. Interacts with HSPA5 (via its J domain).

Its subcellular location is the endoplasmic reticulum lumen. In terms of biological role, endoplasmic reticulum disulfide reductase involved both in the correct folding of proteins and degradation of misfolded proteins. Required for efficient folding of proteins in the endoplasmic reticulum by catalyzing the removal of non-native disulfide bonds formed during the folding of proteins, such as LDLR. Also involved in endoplasmic reticulum-associated degradation (ERAD) by reducing incorrect disulfide bonds in misfolded glycoproteins recognized by EDEM1. Interaction with HSPA5 is required its activity, not for the disulfide reductase activity, but to facilitate the release of DNAJC10 from its substrate. Promotes apoptotic signaling pathway in response to endoplasmic reticulum stress. This chain is DnaJ homolog subfamily C member 10 (DNAJC10), found in Homo sapiens (Human).